The sequence spans 335 residues: MTLPLLGPMTLSGFAHSWFFLFLFVVAGLVALYILMQLARQRRMLRFANMELLESVAPKRPSRWRHVPAILLVLSLLLFTIAMAGPTHDVRIPRNRAVVMLVIDVSQSMRATDVEPSRMVAAQEAAKQFADELTPGINLGLIAYAGTATVLVSPTTNREATKNALDKLQFADRTATGEAIFTALQAIATVGAVIGGGDTPPPARIVLFSDGKETMPTNPDNPKGAYTAARTAKDQGVPISTISFGTPYGFVEINDQRQPVPVDDETMKKVAQLSGGNSYNAATLAELRAVYSSLQQQIGYETIKGDASVGWLRLGALALALAALAALLINRRLPT.

A run of 2 helical transmembrane segments spans residues 18–38 and 67–87; these read WFFLFLFVVAGLVALYILMQL and VPAILLVLSLLLFTIAMAGPT. The VWFA domain occupies 98-294; the sequence is VVMLVIDVSQ…AELRAVYSSL (197 aa). A helical membrane pass occupies residues 309–329; sequence VGWLRLGALALALAALAALLI.

This sequence belongs to the UPF0353 family.

The protein localises to the cell membrane. This is UPF0353 protein MT1528 from Mycobacterium tuberculosis (strain CDC 1551 / Oshkosh).